The following is a 153-amino-acid chain: MIINETKGRVWHGHVELADTFIKRFRGLMLVSNVNHALIFVLPIENRLNASIHMFFMLSDIDVIWLDSMRRVVDFKTARRWRIYTPKESARYVIEGPVGLIRTLDVEEGDLISWDVTEKKEKSVPVKVSFPGKISFENERNTVVFSKDIIELP.

Belongs to the UPF0127 family.

The protein is UPF0127 protein TGAM_1372 of Thermococcus gammatolerans (strain DSM 15229 / JCM 11827 / EJ3).